The chain runs to 205 residues: E3 ubiquitin-protein ligase complex slx8-rfp subunit rfp2 (205 aa).

The RING-type; degenerate zinc-finger motif lies at Cys147–His190.

Part of an E3 ubiquitin complex including rfp1, rfp2 and slx8. Interacts with slx8.

It is found in the nucleus. The enzyme catalyses S-ubiquitinyl-[E2 ubiquitin-conjugating enzyme]-L-cysteine + [acceptor protein]-L-lysine = [E2 ubiquitin-conjugating enzyme]-L-cysteine + N(6)-ubiquitinyl-[acceptor protein]-L-lysine.. It functions in the pathway protein modification; protein ubiquitination. In terms of biological role, mediates ubiquitination and subsequent desumoylation/degradation of sumoylated proteins and proteins containing SUMO-like domains. Involved in maintaining genome stability where it acts in the cellular response to DNA damage. The chain is E3 ubiquitin-protein ligase complex slx8-rfp subunit rfp2 (rfp2) from Schizosaccharomyces pombe (strain 972 / ATCC 24843) (Fission yeast).